The primary structure comprises 448 residues: Probable glycine dehydrogenase (decarboxylating) subunit 1 (448 aa).

Belongs to the GcvP family. N-terminal subunit subfamily. As to quaternary structure, the glycine cleavage system is composed of four proteins: P, T, L and H. In this organism, the P 'protein' is a heterodimer of two subunits.

It catalyses the reaction N(6)-[(R)-lipoyl]-L-lysyl-[glycine-cleavage complex H protein] + glycine + H(+) = N(6)-[(R)-S(8)-aminomethyldihydrolipoyl]-L-lysyl-[glycine-cleavage complex H protein] + CO2. Functionally, the glycine cleavage system catalyzes the degradation of glycine. The P protein binds the alpha-amino group of glycine through its pyridoxal phosphate cofactor; CO(2) is released and the remaining methylamine moiety is then transferred to the lipoamide cofactor of the H protein. This chain is Probable glycine dehydrogenase (decarboxylating) subunit 1, found in Staphylococcus carnosus (strain TM300).